The following is a 373-amino-acid chain: MATSASSHLNKGIKQMYMSLPQGEKVQAMYIWVDGTGEGLRCKTRTLDCEPKCVEELPEWNFDGSSTFQSESSNSDMYLSPVAMFRDPFRKEPNKLVFCEVFKYNQKPAETNLRHTCKRIMDMVSNQHPWFGMEQEYTLLGTDGHPFGWPSDGFPGPQGLYYCGVGADKAYRRDIMEAHYRACLYAGVKITGTYAEVKHAQWEFQIGPCEGIRMGDHLWVARFILHRVCKDFGVIATFDSKPIPGNWNGAGCHTNFSTKTMREENGLKHIKEAIEKLSKRHRYHIRAYDPKGGLDNARRLTGFHKTSNINDFSAGVADRSASIRIPRTVGQEKKGYFEARCPSANCDPFAVTEAIVRTCLLNETGDQPFQYKN.

N-acetylalanine is present on Ala-2. A required for glutamine-induced ubiquitination by CRL4(CRBN) and proteasomal degradation region spans residues 2–25 (ATSASSHLNKGIKQMYMSLPQGEK). An N6-acetyllysine mark is found at Lys-11 and Lys-14. Positions 24–106 (EKVQAMYIWV…VFCEVFKYNQ (83 aa)) constitute a GS beta-grasp domain. Tyr-104 carries the phosphotyrosine modification. The GS catalytic domain occupies 113–373 (LRHTCKRIMD…TGDQPFQYKN (261 aa)). Glu-134 serves as a coordination point for ATP. 4 residues coordinate Mn(2+): Glu-134, Glu-136, Glu-196, and Glu-203. Position 203 to 208 (203 to 208 (EFQIGP)) interacts with ATP. L-glutamate is bound at residue 246–247 (NW). A Mn(2+)-binding site is contributed by His-253. ATP contacts are provided by residues 255-257 (NFS), Arg-319, and Arg-324. Arg-319 contributes to the L-glutamate binding site. 336–338 (YFE) contributes to the ADP binding site. Mn(2+) is bound at residue Glu-338. Residue Arg-340 coordinates L-glutamate. At Ser-343 the chain carries Phosphoserine.

This sequence belongs to the glutamine synthetase family. In terms of assembly, decamer; composed of two pentamers. Interacts with PALMD. Interacts with RHOJ. Interacts with BEST2; this interaction tethers a fraction of GLUL to the membrane, causing a decrease of cytosolic glutamine synthase (GS) activity and inhibits the chloride channel activity of BEST2 by affecting the gating at the aperture in the absence of intracellular glutamate. The cofactor is Mg(2+). Mn(2+) serves as cofactor. Post-translationally, palmitoylated; undergoes autopalmitoylation. In terms of processing, acetylated by EP300/p300; acetylation is stimulated by increased glutamine levels and promotes ubiquitin-mediated proteasomal degradation. Ubiquitinated by ZNRF1. Ubiquitinated by the DCX (DDB1-CUL4-X-box) E3 ubiquitin-protein ligase complex called CRL4(CRBN), leading to proteasomal degradation.

The protein localises to the cytoplasm. The protein resides in the cytosol. It is found in the microsome. Its subcellular location is the mitochondrion. It localises to the cell membrane. It carries out the reaction L-glutamate + NH4(+) + ATP = L-glutamine + ADP + phosphate + H(+). The enzyme catalyses L-cysteinyl-[protein] + hexadecanoyl-CoA = S-hexadecanoyl-L-cysteinyl-[protein] + CoA. Its activity is regulated as follows. Glutamine synthetase activity is inhibited by methionine sulfoximine (MSO). Glutamine synthetase that catalyzes the ATP-dependent conversion of glutamate and ammonia to glutamine. Its role depends on tissue localization: in the brain, it regulates the levels of toxic ammonia and converts neurotoxic glutamate to harmless glutamine, whereas in the liver, it is one of the enzymes responsible for the removal of ammonia. Plays a key role in ammonium detoxification during erythropoiesis: the glutamine synthetase activity is required to remove ammonium generated by porphobilinogen deaminase (HMBS) during heme biosynthesis to prevent ammonium accumulation and oxidative stress. Essential for proliferation of fetal skin fibroblasts. Independently of its glutamine synthetase activity, required for endothelial cell migration during vascular development. Involved in angiogenesis by regulating membrane localization and activation of the GTPase RHOJ, possibly by promoting RHOJ palmitoylation. May act as a palmitoyltransferase for RHOJ: able to autopalmitoylate and then transfer the palmitoyl group to RHOJ. Plays a role in ribosomal 40S subunit biogenesis. Through the interaction with BEST2, inhibits BEST2 channel activity by affecting the gating at the aperture in the absence of intracellular L-glutamate, but sensitizes BEST2 to intracellular L-glutamate, which promotes the opening of BEST2 and thus relieves its inhibitory effect on BEST2. The sequence is that of Glutamine synthetase from Cricetulus griseus (Chinese hamster).